Here is a 289-residue protein sequence, read N- to C-terminus: Acetyl-coenzyme A carboxylase carboxyl transferase subunit beta (289 aa).

Positions 28 to 289 (VMTKCPECKK…QGGEMAVWQS (262 aa)) constitute a CoA carboxyltransferase N-terminal domain. Zn(2+)-binding residues include C32, C35, C51, and C54. A C4-type zinc finger spans residues 32–54 (CPECKKIMYTKELLKNLKVCVNC).

The protein belongs to the AccD/PCCB family. Acetyl-CoA carboxylase is a heterohexamer composed of biotin carboxyl carrier protein (AccB), biotin carboxylase (AccC) and two subunits each of ACCase subunit alpha (AccA) and ACCase subunit beta (AccD). The cofactor is Zn(2+).

It localises to the cytoplasm. The enzyme catalyses N(6)-carboxybiotinyl-L-lysyl-[protein] + acetyl-CoA = N(6)-biotinyl-L-lysyl-[protein] + malonyl-CoA. It functions in the pathway lipid metabolism; malonyl-CoA biosynthesis; malonyl-CoA from acetyl-CoA: step 1/1. Functionally, component of the acetyl coenzyme A carboxylase (ACC) complex. Biotin carboxylase (BC) catalyzes the carboxylation of biotin on its carrier protein (BCCP) and then the CO(2) group is transferred by the transcarboxylase to acetyl-CoA to form malonyl-CoA. The protein is Acetyl-coenzyme A carboxylase carboxyl transferase subunit beta of Bacillus cereus (strain ATCC 14579 / DSM 31 / CCUG 7414 / JCM 2152 / NBRC 15305 / NCIMB 9373 / NCTC 2599 / NRRL B-3711).